Consider the following 306-residue polypeptide: Ribosomal RNA small subunit methyltransferase H (306 aa).

S-adenosyl-L-methionine contacts are provided by residues 33 to 35, aspartate 51, phenylalanine 78, aspartate 96, and glutamine 103; that span reads GGY.

Belongs to the methyltransferase superfamily. RsmH family.

The protein localises to the cytoplasm. It catalyses the reaction cytidine(1402) in 16S rRNA + S-adenosyl-L-methionine = N(4)-methylcytidine(1402) in 16S rRNA + S-adenosyl-L-homocysteine + H(+). Functionally, specifically methylates the N4 position of cytidine in position 1402 (C1402) of 16S rRNA. This chain is Ribosomal RNA small subunit methyltransferase H, found in Rickettsia prowazekii (strain Madrid E).